Here is a 951-residue protein sequence, read N- to C-terminus: Sodium/potassium exporting P-type ATPase 1 (951 aa).

At 1–57 (MMGANSTEWHGQSVEQVTELLGTDVERGLKESVVGQLQKQFGPNELKGQRGVNPWKV) the chain is on the cytoplasmic side. Residues 58–78 (LLAQFTNGLTVILLIATVVSF) traverse the membrane as a helical segment. The Extracellular portion of the chain corresponds to 79–82 (AVQD). Residues 83-103 (HAEGGVLAFVIIFNASVGFVQ) traverse the membrane as a helical segment. At 104-247 (EYRAEKTMDA…TPMQKRLNRM (144 aa)) the chain is on the cytoplasmic side. The chain crosses the membrane as a helical span at residues 248 to 268 (AYILFGISLVLAVIVFAVNKF). Over 269 to 273 (EFNTD) the chain is Extracellular. A helical transmembrane segment spans residues 274–294 (IIIYAVSLGIAVIPEGLIAVI). At 295-717 (TIVMALGVRR…GRRIFSNIRK (423 aa)) the chain is on the cytoplasmic side. The 4-aspartylphosphate intermediate role is filled by Asp-330. Mg(2+) is bound by residues Asp-330 and Thr-332. Thr-332, Glu-414, Lys-467, Arg-511, Thr-575, Gly-576, Asp-577, Arg-636, and Lys-642 together coordinate ATP. Asp-661 is a binding site for Mg(2+). Asn-664 contributes to the ATP binding site. The chain crosses the membrane as a helical span at residues 718–738 (FILHLVSTNVGEVIVLIIGLA). At 739 to 743 (FKDRN) the chain is on the extracellular side. The chain crosses the membrane as a helical span at residues 744–764 (GVSVFPLAPVQILFMNMVTST). Residues 765–799 (PPAMALGVEAASKDTMKVPPHTKGLFGKEVLADMM) are Cytoplasmic-facing. Residues 800–820 (VYGIIMGSLILVDWVLVIYAF) form a helical membrane-spanning segment. The Extracellular portion of the chain corresponds to 821–840 (GDSQLGLECNSDRMLNECNT). Residues 841 to 861 (VFRARSTIMVALIWMLLLHAY) form a helical membrane-spanning segment. Topologically, residues 862-885 (NCRHPRASLFTAEGGGASKLFSNR) are cytoplasmic. The helical transmembrane segment at 886-906 (LLVWSVLLGSLMPIPTVYIPT) threads the bilayer. At 907–916 (LNTKIFKQET) the chain is on the extracellular side. Residues 917-937 (ISWEWSIVVVSVVAFFFLSEL) form a helical membrane-spanning segment. Residues 938–951 (YKLIKRNVMTSRVI) lie on the Cytoplasmic side of the membrane.

It belongs to the cation transport ATPase (P-type) (TC 3.A.3) family. Type IID subfamily. Mg(2+) serves as cofactor. The active site is phosphorylated in presence of sodium or potassium and in conditions of higher pH. Not phosphorylated in presence of calcium ions.

Its subcellular location is the cell membrane. The enzyme catalyses Na(+)(in) + ATP + H2O = Na(+)(out) + ADP + phosphate + H(+). It catalyses the reaction K(+)(in) + ATP + H2O = K(+)(out) + ADP + phosphate + H(+). Catalyzes the hydrolysis of ATP coupled with the export of sodium and potassium from the cell. Appears to export potassium more efficiently than sodium. May transport other cations such as lithium. Sodium/potassium efflux ATPases are involved in salt tolerance and maintaining the membrane potential across the plasma membrane in high salinity (Na+) or alkaline (K+) environments. The protein is Sodium/potassium exporting P-type ATPase 1 of Marchantia polymorpha (Common liverwort).